Here is a 327-residue protein sequence, read N- to C-terminus: 2-keto-3-deoxygluconate permease (327 aa).

A run of 10 helical transmembrane segments spans residues 10–30 (IPGG…TFSP), 42–62 (GMIT…GASI), 73–93 (KSGT…AIAS), 95–115 (IIPE…LALV), 139–159 (AGAF…IILG), 163–183 (IASF…VGFA), 199–219 (VQTL…LTVI), 224–244 (LLGI…LIIA), 254–274 (TAGI…VLIA), and 289–309 (SLVA…TSIW).

Belongs to the KdgT transporter family.

It is found in the cell inner membrane. The enzyme catalyses 2-dehydro-3-deoxy-D-gluconate(in) + H(+)(in) = 2-dehydro-3-deoxy-D-gluconate(out) + H(+)(out). Catalyzes the proton-dependent uptake of 2-keto-3-deoxygluconate (KDG) into the cell. This Escherichia coli O139:H28 (strain E24377A / ETEC) protein is 2-keto-3-deoxygluconate permease.